The following is a 149-amino-acid chain: Low molecular weight protein-tyrosine-phosphatase Wzb (149 aa).

Residue Cys9 is the Nucleophile of the active site. The active site involves Arg15. The Proton donor role is filled by Asp115.

Belongs to the low molecular weight phosphotyrosine protein phosphatase family.

It carries out the reaction O-phospho-L-tyrosyl-[protein] + H2O = L-tyrosyl-[protein] + phosphate. It functions in the pathway glycan metabolism; exopolysaccharide biosynthesis. Its function is as follows. Dephosphorylates Wzc. Required for the extracellular polysaccharide colanic acid synthesis. Probably involved in the export of colanic acid from the cell to medium. Involved in protection of cells against contact-dependent growth inhibition (CDI). In Salmonella typhi, this protein is Low molecular weight protein-tyrosine-phosphatase Wzb (wzb).